The sequence spans 418 residues: Protein-lysine 6-oxidase (418 aa).

Residues 1–20 (MRFAWTALLGSLQLCALVRC) form the signal peptide. A propeptide spans 21 to 169 (APPAASHRQP…NRVEVDGMVG (149 aa)) (removed by BMP1). The disordered stretch occupies residues 63 to 84 (YQPQRRRDPGATAPGAANATAP). Residues 72–84 (GATAPGAANATAP) are compositionally biased toward low complexity. Residues asparagine 80, asparagine 96, and asparagine 143 are each glycosylated (N-linked (GlcNAc...) asparagine). Positions 130–175 (TSGAHDAGTSRADNQTAPGEVPTLSNLRPPNRVEVDGMVGDDPYNP) are disordered. Residues 140–157 (RADNQTAPGEVPTLSNLR) are compositionally biased toward polar residues. Residue tyrosine 188 is modified to Sulfotyrosine. The lysyl-oxidase like stretch occupies residues 214 to 418 (PDLVPDPYYI…YASGCTISPY (205 aa)). 5 cysteine pairs are disulfide-bonded: cysteine 239/cysteine 245, cysteine 292/cysteine 341, cysteine 325/cysteine 331, cysteine 352/cysteine 362, and cysteine 399/cysteine 413. 3 residues coordinate Cu cation: histidine 293, histidine 295, and histidine 297. A cross-link (lysine tyrosylquinone (Lys-Tyr)) is located at residues 321–356 (KASFCLEDTSCDYGYHRRFACTAHTQGLSPGCYDTY). The residue at position 356 (tyrosine 356) is a 2',4',5'-topaquinone.

Belongs to the lysyl oxidase family. Interacts with MFAP4. Interacts (via propeptide) with EFEMP2; this interaction is strong and facilitates formation of ternary complexes with ELN during elastic fiber assembly; this interaction limits interaction of EFEMP2 with FBLN5. Requires Cu cation as cofactor. Lysine tyrosylquinone residue serves as cofactor. In terms of processing, the lysine tyrosylquinone cross-link (LTQ) is generated by condensation of the epsilon-amino group of a lysine with a topaquinone produced by oxidation of tyrosine. Post-translationally, proteolytically cleaved by BMP1 which removes the propeptide. Also proteolytically cleaved by ADAMTS2 and ADAMTS14, but not by ADAMTS3, at an additional cleavage site downstream of the BMP1 cleavage site. The propeptide plays a role in directing the deposition of this enzyme to elastic fibers, via interaction with tropoelastin. Cleavage by BMP1 to remove the propeptide does not increase enzymatic activity but increases binding to collagen. Cleavage by ADAMTS2 produces a form with reduced collagen-binding activity. Sulfated at Tyr-188 and also at either Tyr-184 or Tyr-185 which enhances binding to collagen.

It is found in the secreted. It localises to the extracellular space. It catalyses the reaction L-lysyl-[protein] + O2 + H2O = (S)-2-amino-6-oxohexanoyl-[protein] + H2O2 + NH4(+). Responsible for the post-translational oxidative deamination of peptidyl lysine residues in precursors to fibrous collagen and elastin. Regulator of Ras expression. May play a role in tumor suppression. Plays a role in the aortic wall architecture. This Bos taurus (Bovine) protein is Protein-lysine 6-oxidase.